A 522-amino-acid chain; its full sequence is Major facilitator-type transporter sorT (522 aa).

The tract at residues 1 to 21 is disordered; sequence MSHTEPKAPVNTGEVENGHLY. 12 helical membrane-spanning segments follow: residues 52–72, 89–109, 121–141, 143–163, 183–203, 211–231, 280–300, 324–344, 366–386, 395–415, 427–447, and 457–477; these read WFIA…SSAY, VFIV…AVWA, QILW…SAGS, NVAT…SPLV, TIYC…GGFV, WVQG…IVFI, WIFL…AIIY, IGGL…VYAI, LPPA…FAWT, VSII…LPIM, ASVL…FPLF, and IHWA…FPLI.

The protein belongs to the major facilitator superfamily. Sugar transporter (TC 2.A.1.1) family.

It localises to the membrane. Major facilitator-type transporter; part of the gene cluster that mediates the biosynthesis of sorbicillinoids, a diverse group of yellow secondary metabolites that restrict growth of competing pathogenic fungi but not of bacteria. The protein is Major facilitator-type transporter sorT of Penicillium rubens (strain ATCC 28089 / DSM 1075 / NRRL 1951 / Wisconsin 54-1255) (Penicillium chrysogenum).